Consider the following 363-residue polypeptide: MKIGVFVPIGNNGWLISTTAPQYMPTFELNKAIVQKAEHYHFDFALSMIKLRGFGGKTEFWDHNLESFTLMAGLAAVTSRIQIYATAATLTLPPAIVARMASTIDSISGGRFGVNLVTGWQKPEYDQMGIWPGDEYFSRRYDYLTEYVQVLRDLWGTGKSDFKGDYFTMNDCRVSPQPSTPMKVICAGQSDAGMAFSAQHADFNFCFGKGVNTPAAFAPTAARMKDAAEKTGRDVGSYVLFMVIADETDEAARAKWEHYKAGADEDALSWLTEQSQKDTRSGADTNVRQMADPTSAVNINMGTLVGSYASVAKMLDEVASVPGAEGVLLTFDDFLQGVETFGERIQPLMECRSHIPAVTREVA.

Residues 49-50 (IK), N115, E124, 140-141 (RY), and S190 each bind FMN.

This sequence belongs to the NtaA/SnaA/DszA monooxygenase family. RutA subfamily.

The enzyme catalyses uracil + FMNH2 + NADH + O2 = (Z)-3-ureidoacrylate + FMN + NAD(+) + H2O + H(+). It catalyses the reaction thymine + FMNH2 + NADH + O2 = (Z)-2-methylureidoacrylate + FMN + NAD(+) + H2O + H(+). In terms of biological role, catalyzes the pyrimidine ring opening between N-3 and C-4 by an unusual flavin hydroperoxide-catalyzed mechanism, adding oxygen atoms in the process to yield ureidoacrylate peracid, that immediately reacts with FMN forming ureidoacrylate and FMN-N(5)-oxide. The FMN-N(5)-oxide reacts spontaneously with NADH to produce FMN. Requires the flavin reductase RutF to regenerate FMN in vivo. This Enterobacter sp. (strain 638) protein is Pyrimidine monooxygenase RutA.